Consider the following 149-residue polypeptide: Deoxyuridine 5'-triphosphate nucleotidohydrolase (149 aa).

Substrate-binding positions include 68 to 70 (RSG), Asn81, 85 to 87 (TID), and Lys95.

The protein belongs to the dUTPase family. Mg(2+) serves as cofactor.

The enzyme catalyses dUTP + H2O = dUMP + diphosphate + H(+). It participates in pyrimidine metabolism; dUMP biosynthesis; dUMP from dCTP (dUTP route): step 2/2. In terms of biological role, this enzyme is involved in nucleotide metabolism: it produces dUMP, the immediate precursor of thymidine nucleotides and it decreases the intracellular concentration of dUTP so that uracil cannot be incorporated into DNA. This Bdellovibrio bacteriovorus (strain ATCC 15356 / DSM 50701 / NCIMB 9529 / HD100) protein is Deoxyuridine 5'-triphosphate nucleotidohydrolase.